We begin with the raw amino-acid sequence, 236 residues long: Glycosylphosphatidylinositol anchor biosynthesis protein 11 (236 aa).

A run of 2 helical transmembrane segments spans residues 40–60 (TLTI…FGLT) and 65–85 (GVML…GYLI). A glycan (N-linked (GlcNAc...) asparagine) is linked at Asn99. Helical transmembrane passes span 107 to 127 (LLAG…VALI), 139 to 159 (ETYL…LVLY), 184 to 204 (ILLS…PIPL), and 215 to 235 (ITLL…CFLF).

Belongs to the PIGF family.

It is found in the endoplasmic reticulum membrane. It participates in glycolipid biosynthesis; glycosylphosphatidylinositol-anchor biosynthesis. Its function is as follows. Acts in the GPI biosynthetic pathway between GlcNAc-PI synthesis and GPI transfer to protein. The sequence is that of Glycosylphosphatidylinositol anchor biosynthesis protein 11 (GPI11) from Debaryomyces hansenii (strain ATCC 36239 / CBS 767 / BCRC 21394 / JCM 1990 / NBRC 0083 / IGC 2968) (Yeast).